The following is a 461-amino-acid chain: Fibrinogen C domain-containing protein 1 (461 aa).

The segment at methionine 1–glutamine 24 is disordered. Topologically, residues methionine 1–cysteine 33 are cytoplasmic. Over residues leucine 15–glutamine 24 the composition is skewed to basic and acidic residues. Residues threonine 34 to leucine 54 traverse the membrane as a helical; Signal-anchor for type II membrane protein segment. Residues asparagine 55–arginine 461 are Extracellular-facing. Residues glycine 214–glycine 238 form a disordered region. The Fibrinogen C-terminal domain occupies cysteine 235–arginine 458. A disulfide bond links cysteine 244 and cysteine 273. Asparagine 340 carries N-linked (GlcNAc...) asparagine glycosylation. Positions 393 and 395 each coordinate Ca(2+). Cysteine 401 and cysteine 414 are oxidised to a cystine.

As to quaternary structure, homotetramer; disulfide-linked. As to expression, expressed in the small and large intestinal epithelial cells with a highly polarized localization to the apical surface corresponding to the brush border and in the ducts of the salivary gland.

It localises to the membrane. In terms of biological role, acetyl group-binding receptor which shows a high-affinity and calcium-dependent binding to acetylated structures such as chitin, some N-acetylated carbohydrates, and amino acids, but not to their non-acetylated counterparts. Can facilitate the endocytosis of acetylated components. The chain is Fibrinogen C domain-containing protein 1 (FIBCD1) from Homo sapiens (Human).